The following is a 319-amino-acid chain: MTYARIAKSSRYLPEFAVSNDDLSQIMETSDEWIKTRTGISSRRISQQENTSDLAIQVAKQLLAGEDPAGVDLIIVATMSPDAYTPATAALVQAAVGAENAACFDLSAACSGFVYALDVAEKMLRRPGGMALVIGAETLSKLVDWQDRTTAVLFGDGAGGVLVKNDALEPHFLASQLKSYGHLAKFLSAGQTSPQPFPGPVTDLAPFKMNGREVYKFATHKVPEVITACLEEAGVGLAEVDLFLFHQANYRIVKQVARRLDLPEEKFPCNIAEYGNTSAASEAILLAELAEEGKAQAGDLVVLAGFGGGLTAAAQLVRL.

Active-site residues include Cys-110 and His-246. The segment at 247–251 (QANYR) is ACP-binding. Asn-276 is an active-site residue.

This sequence belongs to the thiolase-like superfamily. FabH family. In terms of assembly, homodimer.

Its subcellular location is the cytoplasm. The catalysed reaction is malonyl-[ACP] + acetyl-CoA + H(+) = 3-oxobutanoyl-[ACP] + CO2 + CoA. It participates in lipid metabolism; fatty acid biosynthesis. Catalyzes the condensation reaction of fatty acid synthesis by the addition to an acyl acceptor of two carbons from malonyl-ACP. Catalyzes the first condensation reaction which initiates fatty acid synthesis and may therefore play a role in governing the total rate of fatty acid production. Possesses both acetoacetyl-ACP synthase and acetyl transacylase activities. Its substrate specificity determines the biosynthesis of branched-chain and/or straight-chain of fatty acids. This chain is Beta-ketoacyl-[acyl-carrier-protein] synthase III, found in Lactobacillus delbrueckii subsp. bulgaricus (strain ATCC BAA-365 / Lb-18).